We begin with the raw amino-acid sequence, 254 residues long: C-X-C motif chemokine 16 (254 aa).

The signal sequence occupies residues 1-29; the sequence is MGRDLRPGSRVLLLLLLLLLVYLTQPGNG. Residues 30 to 205 are Extracellular-facing; the sequence is NEGSVTGSCY…AGPTARTSAT (176 aa). The chemokine stretch occupies residues 32-107; the sequence is GSVTGSCYCG…DLKECGHAYS (76 aa). 2 cysteine pairs are disulfide-bonded: C38–C68 and C40–C82. Residues 146-165 are disordered; the sequence is QSTQRPTLPVGSLSSDKELT. An N-linked (GlcNAc...) asparagine glycan is attached at N168. Residues 178-200 are disordered; sequence SLAAGPEAGENQKQPEKNAGPTA. A helical membrane pass occupies residues 206–226; the sequence is VPVLCLLAIIFILTAALSYVL. Residues 227–254 lie on the Cytoplasmic side of the membrane; that stretch reads CKRRRGQSPQSSPDLPVHYIPVAPDSNT. A disordered region spans residues 231 to 254; the sequence is RGQSPQSSPDLPVHYIPVAPDSNT.

Belongs to the intercrine alpha (chemokine CxC) family. Glycosylated. Expressed in T-cell areas. Expressed in spleen, lymph nodes, lung, kidney, small intestine and thymus. Weak expression in heart and liver and no expression in brain and bone marrow.

The protein resides in the cell membrane. It localises to the secreted. In terms of biological role, acts as a scavenger receptor on macrophages, which specifically binds to OxLDL (oxidized low density lipoprotein), suggesting that it may be involved in pathophysiology such as atherogenesis. Induces a strong chemotactic response. Induces calcium mobilization. Binds to CXCR6/Bonzo. This chain is C-X-C motif chemokine 16 (CXCL16), found in Homo sapiens (Human).